A 345-amino-acid polypeptide reads, in one-letter code: Uroporphyrinogen decarboxylase (345 aa).

Residues arginine 27–arginine 31, aspartate 77, tyrosine 152, serine 207, and histidine 323 contribute to the substrate site.

This sequence belongs to the uroporphyrinogen decarboxylase family. Homodimer.

It is found in the cytoplasm. It carries out the reaction uroporphyrinogen III + 4 H(+) = coproporphyrinogen III + 4 CO2. Its pathway is porphyrin-containing compound metabolism; protoporphyrin-IX biosynthesis; coproporphyrinogen-III from 5-aminolevulinate: step 4/4. Its function is as follows. Catalyzes the decarboxylation of four acetate groups of uroporphyrinogen-III to yield coproporphyrinogen-III. This is Uroporphyrinogen decarboxylase from Maricaulis maris (strain MCS10) (Caulobacter maris).